The primary structure comprises 213 residues: MAEEENKKFKVNANDAVNLAAEQSKSTSDKNLPEFGDMPIPDDTANLRKGPNLHDGLLALLPLIGVWRGQGQAAPPGEEEFTFGQQVVFAHDGENRISYDSRTWRMDDDGKPTEIPDRRESGFLRINDDDEIEMILTHSDGMVEILYGSPLNERAWQLESASTMATATGPTNLGPGKRLYGLMPNNDLGWVDERLIDGEMVPWQSAQLSRVVG.

Residues 17–42 (VNLAAEQSKSTSDKNLPEFGDMPIPD) are disordered. Residues 65–71 (GVWRGQG) carry the GXWXGXG motif.

The protein belongs to the nitrobindin family.

In Corynebacterium jeikeium (strain K411), this protein is Ferric nitrobindin-like protein.